The chain runs to 1019 residues: Sca1 complex protein phr (1019 aa).

Disordered regions lie at residues I89–F118, A131–N202, Q265–N287, and S512–L546. Residues S93–S102 are compositionally biased toward low complexity. Residues N141 to D155 are compositionally biased toward basic and acidic residues. Residues N158–N188 adopt a coiled-coil conformation. Residues N158–N202 show a composition bias toward low complexity. Residues E735–F836 enclose the PH domain. Positions V860–G872 are enriched in low complexity. Disordered regions lie at residues V860–I890, N904–L951, and S977–K1019. Positions T879–I890 are enriched in polar residues. Over residues S977–S986 the composition is skewed to low complexity. A compositionally biased stretch (polar residues) spans P987–K1019.

As to quaternary structure, component of the Sca1 complex composed of at least gefA, gefH, scaA, phr, and the protein phosphatase 2A subunits pppA and pho2B. Interacts directly with gefH.

Its subcellular location is the cell membrane. Its function is as follows. Component of the Sca1 complex, a regulator of cell motility, chemotaxis and signal relay. The Sca1 complex is recruited to the plasma membrane in a chemoattractant- and F-actin-dependent manner and is enriched at the leading edge of chemotaxing cells where it regulates F-actin dynamics and signal relay by controlling the activation of rasC and the downstream target of rapamycin complex 2 (TORC2)-Akt/protein kinase B (PKB) pathway. The polypeptide is Sca1 complex protein phr (Dictyostelium discoideum (Social amoeba)).